The primary structure comprises 295 residues: Pyridoxal 5'-phosphate synthase subunit PdxS (295 aa).

Residue aspartate 25 participates in D-ribose 5-phosphate binding. Lysine 82 serves as the catalytic Schiff-base intermediate with D-ribose 5-phosphate. A D-ribose 5-phosphate-binding site is contributed by glycine 154. Arginine 166 is a binding site for D-glyceraldehyde 3-phosphate. D-ribose 5-phosphate contacts are provided by residues glycine 215 and 236 to 237 (GS).

It belongs to the PdxS/SNZ family. In the presence of PdxT, forms a dodecamer of heterodimers.

The enzyme catalyses aldehydo-D-ribose 5-phosphate + D-glyceraldehyde 3-phosphate + L-glutamine = pyridoxal 5'-phosphate + L-glutamate + phosphate + 3 H2O + H(+). The protein operates within cofactor biosynthesis; pyridoxal 5'-phosphate biosynthesis. Its function is as follows. Catalyzes the formation of pyridoxal 5'-phosphate from ribose 5-phosphate (RBP), glyceraldehyde 3-phosphate (G3P) and ammonia. The ammonia is provided by the PdxT subunit. Can also use ribulose 5-phosphate and dihydroxyacetone phosphate as substrates, resulting from enzyme-catalyzed isomerization of RBP and G3P, respectively. This Heliobacterium modesticaldum (strain ATCC 51547 / Ice1) protein is Pyridoxal 5'-phosphate synthase subunit PdxS.